A 404-amino-acid polypeptide reads, in one-letter code: Cysteine desulfurase IscS (404 aa).

Pyridoxal 5'-phosphate is bound by residues 75–76 (AT), Asn-155, Gln-183, and 203–205 (SGH). Lys-206 is modified (N6-(pyridoxal phosphate)lysine). Residue Thr-243 participates in pyridoxal 5'-phosphate binding. Cys-328 (cysteine persulfide intermediate) is an active-site residue. Position 328 (Cys-328) interacts with [2Fe-2S] cluster.

The protein belongs to the class-V pyridoxal-phosphate-dependent aminotransferase family. NifS/IscS subfamily. Homodimer. Forms a heterotetramer with IscU, interacts with other sulfur acceptors. Pyridoxal 5'-phosphate is required as a cofactor.

It localises to the cytoplasm. The enzyme catalyses (sulfur carrier)-H + L-cysteine = (sulfur carrier)-SH + L-alanine. Its pathway is cofactor biosynthesis; iron-sulfur cluster biosynthesis. Functionally, master enzyme that delivers sulfur to a number of partners involved in Fe-S cluster assembly, tRNA modification or cofactor biosynthesis. Catalyzes the removal of elemental sulfur and selenium atoms from cysteine and selenocysteine to produce alanine. Functions as a sulfur delivery protein for Fe-S cluster synthesis onto IscU, an Fe-S scaffold assembly protein, as well as other S acceptor proteins. Also functions as a selenium delivery protein in the pathway for the biosynthesis of selenophosphate. The protein is Cysteine desulfurase IscS of Escherichia coli (strain K12 / DH10B).